The sequence spans 209 residues: Imidazole glycerol phosphate synthase subunit HisH (209 aa).

The 206-residue stretch at 4–209 (PVVVFEYGSG…RLLANWIGSL (206 aa)) folds into the Glutamine amidotransferase type-1 domain. The active-site Nucleophile is the cysteine 82. Catalysis depends on residues histidine 190 and glutamate 192.

In terms of assembly, heterodimer of HisH and HisF.

It is found in the cytoplasm. It catalyses the reaction 5-[(5-phospho-1-deoxy-D-ribulos-1-ylimino)methylamino]-1-(5-phospho-beta-D-ribosyl)imidazole-4-carboxamide + L-glutamine = D-erythro-1-(imidazol-4-yl)glycerol 3-phosphate + 5-amino-1-(5-phospho-beta-D-ribosyl)imidazole-4-carboxamide + L-glutamate + H(+). The catalysed reaction is L-glutamine + H2O = L-glutamate + NH4(+). It participates in amino-acid biosynthesis; L-histidine biosynthesis; L-histidine from 5-phospho-alpha-D-ribose 1-diphosphate: step 5/9. IGPS catalyzes the conversion of PRFAR and glutamine to IGP, AICAR and glutamate. The HisH subunit catalyzes the hydrolysis of glutamine to glutamate and ammonia as part of the synthesis of IGP and AICAR. The resulting ammonia molecule is channeled to the active site of HisF. This Leifsonia xyli subsp. xyli (strain CTCB07) protein is Imidazole glycerol phosphate synthase subunit HisH.